The chain runs to 562 residues: MANASQCLDDVPMGGRWPAAPPDQYNEAHRLAMEELVSGGPEAMRGFLKRERLPSFLSEPEMGEILGCASVLPCGDEENSMSASVDCSSVTYFPDRSDVEPPILELGWPAFTTGSYRGVTRVDVHFQPSFGDTIYTCKEAARELIRSAREVIALVMDNFTDNDIFRDIHEACRKRRVPVYILLDQTQVSHFLTMCYNLGVSIETEPHMRVRLLTGNNYYTRSGTKIIGKVREKFLLVDGVKVATGNYSFTWTDGKLNSSNMLVLSGQVVEKFDLQFRILYAQSNPIGAKLLSSIRSRVMCLDKLPCKLPASKKPTLSSLLRMDQAKLSSTPKRHFDEFGAKFNRDVVALDKAAEDEWLQSCDIISGLKEMQTVEVQTEPWEGKNNVRGVDVGIQTSVAAANAATQTSVLSRMASTQTVMVSRSITTQTTETSQCTTQTPAPTSSVARLSNSSNSSSSSFSSASTTSTGSNCSMKSSDFSGTAFYQPEYPLGNCFKKLTKDRQYHYSTIRSKLNHMVSILSNRNRVPNSYMANDAPCYGLQRREIMHGSLLNLRDGVRFYPNM.

Residues 424 to 472 (ITTQTTETSQCTTQTPAPTSSVARLSNSSNSSSSSFSSASTTSTGSNCS) are disordered. A compositionally biased stretch (low complexity) spans 425 to 472 (TTQTTETSQCTTQTPAPTSSVARLSNSSNSSSSSFSSASTTSTGSNCS).

The protein belongs to the FAM83 family.

It localises to the cytoplasm. It is found in the cytoskeleton. Its subcellular location is the spindle. The protein resides in the spindle pole. Functionally, may regulate cell proliferation, growth, migration and epithelial to mesenchymal transition. May also be important for proper chromosome congression and alignment during mitosis. This Xenopus laevis (African clawed frog) protein is Protein FAM83D-B.